Here is a 207-residue protein sequence, read N- to C-terminus: Peptidyl-tRNA hydrolase (207 aa).

Position 30 (tyrosine 30) interacts with tRNA. Histidine 35 serves as the catalytic Proton acceptor. TRNA-binding residues include tyrosine 81, asparagine 83, and asparagine 129.

It belongs to the PTH family. In terms of assembly, monomer.

The protein resides in the cytoplasm. It catalyses the reaction an N-acyl-L-alpha-aminoacyl-tRNA + H2O = an N-acyl-L-amino acid + a tRNA + H(+). Hydrolyzes ribosome-free peptidyl-tRNAs (with 1 or more amino acids incorporated), which drop off the ribosome during protein synthesis, or as a result of ribosome stalling. In terms of biological role, catalyzes the release of premature peptidyl moieties from peptidyl-tRNA molecules trapped in stalled 50S ribosomal subunits, and thus maintains levels of free tRNAs and 50S ribosomes. This is Peptidyl-tRNA hydrolase from Bordetella avium (strain 197N).